Consider the following 169-residue polypeptide: Ribosome maturation factor RimP (169 aa).

The protein belongs to the RimP family.

The protein localises to the cytoplasm. In terms of biological role, required for maturation of 30S ribosomal subunits. The protein is Ribosome maturation factor RimP of Streptomyces avermitilis (strain ATCC 31267 / DSM 46492 / JCM 5070 / NBRC 14893 / NCIMB 12804 / NRRL 8165 / MA-4680).